Here is a 130-residue protein sequence, read N- to C-terminus: MIGNWNYGTGRRKSSVARVFIKKGSGQITVNGKPVEQYFGRQTSIMIVKQPLFLTNNVEAFDIKVNVHGGGESGQAGAVRHGVTRALIDYDAALKSELSRAGFVTRDAREVERKKVGLHGARRRKQFSKR.

It belongs to the universal ribosomal protein uS9 family.

The sequence is that of Small ribosomal subunit protein uS9 from Methylibium petroleiphilum (strain ATCC BAA-1232 / LMG 22953 / PM1).